The following is an 811-amino-acid chain: Elongation factor G, mitochondrial (811 aa).

The N-terminal 64 residues, M1 to A64, are a transit peptide targeting the mitochondrion. One can recognise a tr-type G domain in the interval R96–S394. GTP-binding positions include A105–T112, D192–H196, and N246–D249.

This sequence belongs to the TRAFAC class translation factor GTPase superfamily. Classic translation factor GTPase family. EF-G/EF-2 subfamily.

It is found in the mitochondrion. The protein operates within protein biosynthesis; polypeptide chain elongation. In terms of biological role, mitochondrial GTPase that catalyzes the GTP-dependent ribosomal translocation step during translation elongation. During this step, the ribosome changes from the pre-translocational (PRE) to the post-translocational (POST) state as the newly formed A-site-bound peptidyl-tRNA and P-site-bound deacylated tRNA move to the P and E sites, respectively. Catalyzes the coordinated movement of the two tRNA molecules, the mRNA and conformational changes in the ribosome. In Cryptococcus neoformans var. neoformans serotype D (strain B-3501A) (Filobasidiella neoformans), this protein is Elongation factor G, mitochondrial.